The chain runs to 506 residues: Probable cytochrome P450 309a1 (506 aa).

A phosphothreonine mark is found at Thr-75, Thr-78, and Thr-81. Cys-452 is a binding site for heme.

Belongs to the cytochrome P450 family. The cofactor is heme.

The protein localises to the endoplasmic reticulum membrane. It localises to the microsome membrane. Its function is as follows. May be involved in the metabolism of insect hormones and in the breakdown of synthetic insecticides. The chain is Probable cytochrome P450 309a1 (Cyp309a1) from Drosophila melanogaster (Fruit fly).